Consider the following 81-residue polypeptide: MAITKTSATFVLLIILAASLSNFNVLASDIKPTGRIDNQCKRMCSATYGNGKCAADCRSDGFSSGQCFTSPPFDNRCCCNN.

The signal sequence occupies residues 1–27 (MAITKTSATFVLLIILAASLSNFNVLA). 4 disulfides stabilise this stretch: C40/C79, C44/C67, C53/C77, and C57/C78.

This sequence belongs to the DEFL family.

The protein localises to the secreted. The sequence is that of Defensin-like protein 45 from Arabidopsis thaliana (Mouse-ear cress).